Consider the following 470-residue polypeptide: O-acyltransferase pboC (470 aa).

Residues His-149 and Asp-386 each act as proton acceptor in the active site.

This sequence belongs to the plant acyltransferase family. Monomer.

It functions in the pathway secondary metabolite biosynthesis. O-acetyltransferase; part of the gene cluster that mediates the biosynthesis of protubonine B, a hydroxylated and diacetylated cyclo-L-Trp-L-Leu derivative. Within the pathway, pboC catalyzes the acetylation of protubonine D at the hydroxy group to produce protubonine C. The first step of the protubonine B synthesis is performed by the nonribosomal peptide synthetase pboA that catalyzes the formation of cyclo-L-Trp-L-Leu by condensing L-Leu with L-Trp. The flavin-dependent monooxygenase pboD is responsible for hydroxylation at C-3 of the indole ring and subsequent formation of the pyrrolidine ring, leadind to protubonine D. Protubonine D is further diacetylated by two acetyltransferases, pboB and pboC, to form the final product protubonine B via protubonine C. In Aspergillus ustus, this protein is O-acyltransferase pboC.